Here is a 561-residue protein sequence, read N- to C-terminus: Embryonal Fyn-associated substrate (561 aa).

Residues 5–68 (TSTQLARALY…PANRVKLLPA (64 aa)) enclose the SH3 domain. Disordered regions lie at residues 68-123 (AGPA…CPPS), 171-215 (HPLT…PGPP), 240-372 (LADG…HNEY), and 390-422 (DKAQ…ALSP). The segment covering 103–123 (VPPPARPCPTSGPPAGPCPPS) has biased composition (pro residues). Residue Tyr-253 is modified to Phosphotyrosine; by SRC. Short sequence motifs (SH3-binding) lie at residues 305–311 (RPLPALP) and 335–341 (RPLPPPP). Positions 308–325 (PALPVPEAPSPSPVPSPA) are enriched in pro residues. A compositionally biased stretch (basic and acidic residues) spans 352-372 (VEGDPEGREMEDDPAGHHNEY). The tract at residues 438-488 (FYAGQCQSHYSALQAAVAALMSSTQANQPPRLFVPHSKRVVVAAHRLVFVG) is divergent helix-loop-helix motif.

This sequence belongs to the CAS family. Post-translationally, phosphorylated on multiple tyrosine residues. Phosphorylated on tyrosines by FYN and SRC. In terms of tissue distribution, the protein has been detected in lung and placenta.

Functionally, docking protein which plays a central coordinating role for tyrosine-kinase-based signaling related to cell adhesion. May serve as an activator of SRC and a downstream effector. Interacts with the SH3 domain of FYN and with CRK, SRC, and YES. The polypeptide is Embryonal Fyn-associated substrate (EFS) (Homo sapiens (Human)).